The primary structure comprises 587 residues: Probable intramembrane protease YKL100C (587 aa).

The Lumenal segment spans residues 1-85 (MDKYLNSFVD…HSLVFNYATL (85 aa)). Residues 86-106 (VLIASALVVIGSFTSISSIPF) form a helical membrane-spanning segment. Over 107 to 156 (TALPPTREHSLFDPTDFDVDHDCHVIYRENDEDKKKKKKSKRFFDMMDEK) the chain is Cytoplasmic. The chain crosses the membrane as a helical span at residues 157 to 177 (HAIILPLTSGCTLLALYFVIK). Residues 178–192 (KLHLNWLKYVVKILN) lie on the Lumenal side of the membrane. The chain crosses the membrane as a helical span at residues 193–213 (FNITLLNIPAGTFVYSYFLNS). Residues 214-303 (LFRNLSHLAS…KSKRQISNMY (90 aa)) lie on the Cytoplasmic side of the membrane. A helical membrane pass occupies residues 304–324 (LNSALIVSFVLSIVSTVYFYL). At 325-328 (SPND) the chain is on the lumenal side. A helical transmembrane segment spans residues 329 to 349 (WLISNAVSMNMAIWSIAQLKL). Residues 350–351 (KN) lie on the Cytoplasmic side of the membrane. Residues 352 to 372 (LKSGALILIALFFYDICFVFG) form a helical membrane-spanning segment. D366 is a catalytic residue. At 373–401 (TDVMVTVATNLDIPVKLSLPVKFNTAQNN) the chain is on the lumenal side. A helical membrane pass occupies residues 402–422 (FNFSILGLGDIALPGMFIAMC). D411 is an active-site residue. Residues 423-450 (YKYDIWKWHLDHDDTEFHFLNWSYVGKY) lie on the Cytoplasmic side of the membrane. A helical membrane pass occupies residues 451 to 471 (FITAMVSYVASLVSAMVSLSI). Residues 472 to 475 (FNTA) lie on the Lumenal side of the membrane. The chain crosses the membrane as a helical span at residues 476–496 (QPALLYIVPSLLISTILVACW). Residues 477 to 479 (PAL) carry the PAL motif. Topologically, residues 497 to 587 (NKDFKQFWNF…EEDLLDDESS (91 aa)) are cytoplasmic. A disordered region spans residues 561–587 (EFVQEEDLSDSSEEELSEEDLLDDESS).

It belongs to the peptidase A22B family.

The protein localises to the membrane. It is found in the endoplasmic reticulum membrane. In terms of biological role, may act as intramembrane protease. This is Probable intramembrane protease YKL100C from Saccharomyces cerevisiae (strain ATCC 204508 / S288c) (Baker's yeast).